The chain runs to 885 residues: MGYKNSDNTNNKFSRKSMSPSLTGGKGRKTVGKKVKKTIPRKTVNWSSYDVNSDSNEDSDEESENENDSDNDDEDDDETEHHHLDGLYSLMGKRPHDSSSNGDDDDDDDDDNDNKNIFSSTSSDGDSDEAMFSSSDDDSDVDFVKLQAQQKAHALKIAKARKGLKSKPKNESNDNAIASSSESESNSESDNEDDDDDVVSLKKLKPRKKSFLKYGRRRSDAVLPDINFKFEFDTGENDELEAGNQETHIKEPEEEDIGEEVDYSPENPVDSNNVPSLEFEFDHHLIEVPKINEEELNSDEDYEIDDNELLATLQAENDAEEFLPPITKGNSQPQRNDSLISSTIEEEENDNDNEEASKGGDGDDDDDDDDDENDPFLKEEEKYLVNEFETNGFDENEEDEDEDDLHTFDSDFSTTNRIVNSFKGIGEDRSKPIVKYESSVSGGSDYDEDDYIDLINFDVPLFDDKNGHLDGGKKNSHHKGNTDKLKKDKVKQRANSNHNSDEDDDSYLWNYFFSSDNDSSSEETDDKNNSKTVNKSRKNKKNKKALTNNAITGADELFEQIENDNTFKSKSKSNHHGNSLYKAYSDSPMTIQDLEAEIRAGADDDDDDDDDYDSSESTDVDESLPKSSSNNSLVGSSKKATEVLSSKTADYRPPKLGSWVTVDCKPFGVIDGLSTRTLQLNKSQEPRSAAQSGTSHSTSIVNSSNGSGLGLPTTSIASSLAANPRKSIVVGPTNVPSSMISSDDSALGLDELLNVSELDNDDENDVKIWRDFNNNQNKKKIPLGAFRNKSVLYNNHIYQDDQHHHLHRRNSNADKKFNGSGHIKKQQPIRRQSQSKIERRRASIVEAVSQGYRPTKSGLFSETALADVEELLGDDRDLMELIQGL.

Residues 1–22 (MGYKNSDNTNNKFSRKSMSPSL) are compositionally biased toward polar residues. 7 disordered regions span residues 1–138 (MGYK…SDDD), 150–201 (QKAH…VVSL), 234–275 (TGEN…NNVP), 291–410 (INEE…TFDS), 465–639 (KNGH…SSKK), 680–708 (LNKS…NGSG), and 813–835 (ADKK…QSQS). The segment covering 26–40 (KGRKTVGKKVKKTIP) has biased composition (basic residues). Acidic residues-rich tracts occupy residues 55-78 (SNED…DDDE) and 102-112 (GDDDDDDDDDN). A compositionally biased stretch (polar residues) spans 115-124 (KNIFSSTSSD). The segment covering 125 to 138 (GDSDEAMFSSSDDD) has biased composition (acidic residues). Positions 153–167 (HALKIAKARKGLKSK) are enriched in basic residues. Positions 173-184 (NDNAIASSSESE) are enriched in low complexity. 3 stretches are compositionally biased toward acidic residues: residues 185–198 (SNSE…DDDV), 252–263 (PEEEDIGEEVDY), and 294–308 (EELN…DDNE). The span at 328–343 (KGNSQPQRNDSLISST) shows a compositional bias: polar residues. Acidic residues-rich tracts occupy residues 344–354 (IEEEENDNDNE) and 362–374 (GDDD…DEND). Basic and acidic residues predominate over residues 375 to 384 (PFLKEEEKYL). Residues 392-404 (GFDENEEDEDEDD) show a composition bias toward acidic residues. Residues 534–544 (NKSRKNKKNKK) are compositionally biased toward basic residues. Residues 603–622 (DDDDDDDDDYDSSESTDVDE) are compositionally biased toward acidic residues. Residues 626 to 638 (KSSSNNSLVGSSK) show a composition bias toward low complexity. The span at 689-708 (AAQSGTSHSTSIVNSSNGSG) shows a compositional bias: polar residues.

It belongs to the IFH1 family. In terms of assembly, interacts with FLH1 and TBF1.

It localises to the nucleus. In terms of biological role, transcriptional coactivator that together with FHL1 regulates the expression of rRNA and ribosomal protein genes. The FHL1-IFH1 complex is targeted to the ribosomal protein genes by the DNA-binding factor TBF1. This is Transcriptional regulator IFH1 (IFH1) from Candida albicans (strain SC5314 / ATCC MYA-2876) (Yeast).